A 501-amino-acid chain; its full sequence is MIWSSDSCFKSRKHQCLIFLKLCSSIKHLLQIHGQIHLSSLQNDSFIISELVRVSSLSLAKDLAFARTLLLHSSDSTPSTWNMLSRGYSSSDSPVESIWVYSEMKRRGIKPNKLTFPFLLKACASFLGLTAGRQIQVEVLKHGFDFDVYVGNNLIHLYGTCKKTSDARKVFDEMTERNVVSWNSIMTALVENGKLNLVFECFCEMIGKRFCPDETTMVVLLSACGGNLSLGKLVHSQVMVRELELNCRLGTALVDMYAKSGGLEYARLVFERMVDKNVWTWSAMIVGLAQYGFAEEALQLFSKMMKESSVRPNYVTFLGVLCACSHTGLVDDGYKYFHEMEKIHKIKPMMIHYGAMVDILGRAGRLNEAYDFIKKMPFEPDAVVWRTLLSACSIHHDEDDEGIGEKVKKRLIELEPKRSGNLVIVANRFAEARMWAEAAEVRRVMKETKMKKIAGESCLELGGSFHRFFSGYDPRSEYVSIYELLDLFKFQLTCDYRLVSE.

PPR repeat units lie at residues 77–111 (TPSTWNMLSRGYSSSDSPVESIWVYSEMKRRGIKP), 112–146 (NKLTFPFLLKACASFLGLTAGRQIQVEVLKHGFDF), 147–177 (DVYVGNNLIHLYGTCKKTSDARKVFDEMTER), 178–212 (NVVSWNSIMTALVENGKLNLVFECFCEMIGKRFCP), 213–243 (DETTMVVLLSACGGNLSLGKLVHSQVMVREL), 246–276 (NCRLGTALVDMYAKSGGLEYARLVFERMVDK), 277–312 (NVWTWSAMIVGLAQYGFAEEALQLFSKMMKESSVRP), 313–343 (NYVTFLGVLCACSHTGLVDDGYKYFHEMEKI), and 349–379 (MMIHYGAMVDILGRAGRLNEAYDFIKKMPFE). The type E motif stretch occupies residues 384–462 (VWRTLLSACS…IAGESCLELG (79 aa)). The tract at residues 463-493 (GSFHRFFSGYDPRSEYVSIYELLDLFKFQLT) is type E(+) motif.

The protein belongs to the PPR family. PCMP-E subfamily.

The polypeptide is Pentatricopeptide repeat-containing protein At2g36730 (PCMP-E44) (Arabidopsis thaliana (Mouse-ear cress)).